The primary structure comprises 133 residues: Ribosome-binding factor A (133 aa).

The protein belongs to the RbfA family. In terms of assembly, monomer. Binds 30S ribosomal subunits, but not 50S ribosomal subunits or 70S ribosomes.

It is found in the cytoplasm. Functionally, one of several proteins that assist in the late maturation steps of the functional core of the 30S ribosomal subunit. Associates with free 30S ribosomal subunits (but not with 30S subunits that are part of 70S ribosomes or polysomes). Required for efficient processing of 16S rRNA. May interact with the 5'-terminal helix region of 16S rRNA. In Klebsiella pneumoniae (strain 342), this protein is Ribosome-binding factor A.